The sequence spans 506 residues: 2-isopropylmalate synthase (506 aa).

Residues 4–266 (ILFMDTTLRD…EPSMTLKEIK (263 aa)) enclose the Pyruvate carboxyltransferase domain. The Mn(2+) site is built by Asp-13, His-201, His-203, and Asn-237. A regulatory domain region spans residues 390–506 (NITQLQVHFV…KLKSFIQLVK (117 aa)).

This sequence belongs to the alpha-IPM synthase/homocitrate synthase family. LeuA type 1 subfamily. In terms of assembly, homodimer. It depends on Mn(2+) as a cofactor.

The protein resides in the cytoplasm. The enzyme catalyses 3-methyl-2-oxobutanoate + acetyl-CoA + H2O = (2S)-2-isopropylmalate + CoA + H(+). It participates in amino-acid biosynthesis; L-leucine biosynthesis; L-leucine from 3-methyl-2-oxobutanoate: step 1/4. Functionally, catalyzes the condensation of the acetyl group of acetyl-CoA with 3-methyl-2-oxobutanoate (2-ketoisovalerate) to form 3-carboxy-3-hydroxy-4-methylpentanoate (2-isopropylmalate). This is 2-isopropylmalate synthase from Bacillus anthracis (strain A0248).